The primary structure comprises 395 residues: Dihydroorotate dehydrogenase (quinone), mitochondrial (395 aa).

A mitochondrion; not cleaved-targeting transit peptide spans 1–10 (MAWRHLKKRA). Topologically, residues 1-10 (MAWRHLKKRA) are mitochondrial matrix. A helical transmembrane segment spans residues 11-30 (QDAVIILGGGGLLFASYLMA). Residues 31–395 (TGDERFYAEH…TDAIGADHRR (365 aa)) are Mitochondrial intermembrane-facing. FMN contacts are provided by residues 95–99 (AGFDK) and Ser119. Residue Lys99 coordinates substrate. 144 to 148 (NRYGF) contacts substrate. FMN-binding residues include Asn180 and Asn211. 211–216 (NVSSPN) lines the substrate pocket. Residue Ser214 is the Nucleophile of the active site. Residues Lys254 and Thr282 each coordinate FMN. Residue 283–284 (NT) participates in substrate binding. FMN contacts are provided by residues Gly305, Gly334, and 355 to 356 (YT).

The protein belongs to the dihydroorotate dehydrogenase family. Type 2 subfamily. In terms of assembly, monomer. Requires FMN as cofactor. The uncleaved transit peptide is required for mitochondrial targeting and proper membrane integration.

It localises to the mitochondrion inner membrane. It catalyses the reaction (S)-dihydroorotate + a quinone = orotate + a quinol. It participates in pyrimidine metabolism; UMP biosynthesis via de novo pathway; orotate from (S)-dihydroorotate (quinone route): step 1/1. Catalyzes the conversion of dihydroorotate to orotate with quinone as electron acceptor. Required for UMP biosynthesis via de novo pathway. In Homo sapiens (Human), this protein is Dihydroorotate dehydrogenase (quinone), mitochondrial (DHODH).